Reading from the N-terminus, the 209-residue chain is Homeobox protein ceh-2 (209 aa).

The segment covering 1 to 14 has biased composition (basic and acidic residues); the sequence is MTLKFSVERLVDSE. Disordered regions lie at residues 1-46 and 181-209; these read MTLK…KSGK and HKRV…KSVS. A compositionally biased stretch (acidic residues) spans 15–24; it reads KESEEADVEE. A DNA-binding region (homeobox) is located at residues 126 to 185; that stretch reads NKRIRTAFSASQLIQLEKAFEGNHYVVGNERKQLAAKLSLTETQVKVWFQNRRTKHKRVR.

It belongs to the EMX homeobox family. In the anterior pharynx, expressed in the I3 interneuron, the NSM and M3 motor neuron pairs, the three m2 muscle cells and the three e2 epithelial cells (at protein level).

The protein resides in the nucleus. Its function is as follows. Required for activity of the M3 pharyngeal motor neuron. This is Homeobox protein ceh-2 from Caenorhabditis elegans.